Here is a 252-residue protein sequence, read N- to C-terminus: Cytochrome c oxidase subunit 2 (252 aa).

Over 1-39 (MFLIMLKGHILMDAPTPWGIFFQDSASPQMEGIMELHNN) the chain is Mitochondrial intermembrane. Residues 40–59 (IMFYLAIILFTVTWMMITII) form a helical membrane-spanning segment. The Mitochondrial matrix portion of the chain corresponds to 60–81 (RNFVAKKSPIAHKYMNHGTLIE). Residues 82-105 (LIWTITPAFILILIAFPSFKLLYL) form a helical membrane-spanning segment. Topologically, residues 106-252 (MDEVMDPSLV…LLWLRDQMEG (147 aa)) are mitochondrial intermembrane. The Cu cation site is built by histidine 184, cysteine 219, glutamate 221, cysteine 223, histidine 227, and methionine 230. Residue glutamate 221 coordinates Mg(2+).

This sequence belongs to the cytochrome c oxidase subunit 2 family. As to quaternary structure, component of the cytochrome c oxidase (complex IV, CIV), a multisubunit enzyme composed of a catalytic core of 3 subunits and several supernumerary subunits. The complex exists as a monomer or a dimer and forms supercomplexes (SCs) in the inner mitochondrial membrane with ubiquinol-cytochrome c oxidoreductase (cytochrome b-c1 complex, complex III, CIII). Cu cation serves as cofactor.

It is found in the mitochondrion inner membrane. The catalysed reaction is 4 Fe(II)-[cytochrome c] + O2 + 8 H(+)(in) = 4 Fe(III)-[cytochrome c] + 2 H2O + 4 H(+)(out). In terms of biological role, component of the cytochrome c oxidase, the last enzyme in the mitochondrial electron transport chain which drives oxidative phosphorylation. The respiratory chain contains 3 multisubunit complexes succinate dehydrogenase (complex II, CII), ubiquinol-cytochrome c oxidoreductase (cytochrome b-c1 complex, complex III, CIII) and cytochrome c oxidase (complex IV, CIV), that cooperate to transfer electrons derived from NADH and succinate to molecular oxygen, creating an electrochemical gradient over the inner membrane that drives transmembrane transport and the ATP synthase. Cytochrome c oxidase is the component of the respiratory chain that catalyzes the reduction of oxygen to water. Electrons originating from reduced cytochrome c in the intermembrane space (IMS) are transferred via the dinuclear copper A center (CU(A)) of subunit 2 and heme A of subunit 1 to the active site in subunit 1, a binuclear center (BNC) formed by heme A3 and copper B (CU(B)). The BNC reduces molecular oxygen to 2 water molecules using 4 electrons from cytochrome c in the IMS and 4 protons from the mitochondrial matrix. The chain is Cytochrome c oxidase subunit 2 (cox2) from Emericella nidulans (Aspergillus nidulans).